The chain runs to 1358 residues: Xanthine dehydrogenase (1358 aa).

Residues 18-107 (NQLLFFLNGE…GMAVTTIEGL (90 aa)) enclose the 2Fe-2S ferredoxin-type domain. C56, C61, C64, C89, C129, C132, C164, and C166 together coordinate [2Fe-2S] cluster. An FAD-binding PCMH-type domain is found at 253 to 447 (FTGSRVTWYT…ESVFIPYTRP (195 aa)). Residues 281 to 288 (IVVGNTEI), F366, 376 to 380 (SIGGN), D389, L437, and K455 contribute to the FAD site. Positions 805 and 836 each coordinate Mo-molybdopterin. Substrate contacts are provided by E840 and R918. R950 serves as a coordination point for Mo-molybdopterin. 2 residues coordinate substrate: Y952 and T1048. A1117 is a Mo-molybdopterin binding site. The Proton acceptor role is filled by E1302.

It belongs to the xanthine dehydrogenase family. Homodimer. FAD serves as cofactor. The cofactor is Mo-molybdopterin. Requires [2Fe-2S] cluster as cofactor.

The protein localises to the peroxisome. It catalyses the reaction xanthine + NAD(+) + H2O = urate + NADH + H(+). The enzyme catalyses hypoxanthine + NAD(+) + H2O = xanthine + NADH + H(+). Key enzyme in purine degradation. Catalyzes the oxidation of hypoxanthine to xanthine. Catalyzes the oxidation of xanthine to uric acid. The chain is Xanthine dehydrogenase (xdh) from Dictyostelium discoideum (Social amoeba).